A 259-amino-acid chain; its full sequence is Global transcriptional regulator CodY (259 aa).

The interval 1 to 155 (MDLLTRTRKI…GATVVGMEIL (155 aa)) is GAF domain. The H-T-H motif DNA-binding region spans 203–222 (ASKIADRVGITRSVIVNALR). Residue Ser-215 is modified to Phosphoserine.

This sequence belongs to the CodY family.

It is found in the cytoplasm. Its function is as follows. DNA-binding global transcriptional regulator which is involved in the adaptive response to starvation and acts by directly or indirectly controlling the expression of numerous genes in response to nutrient availability. During rapid exponential growth, CodY is highly active and represses genes whose products allow adaptation to nutrient depletion. The polypeptide is Global transcriptional regulator CodY (Shouchella clausii (strain KSM-K16) (Alkalihalobacillus clausii)).